The sequence spans 329 residues: Serine dehydratase-like (329 aa).

Methionine 1 bears the N-acetylmethionine mark. Lysine 48 carries the post-translational modification N6-(pyridoxal phosphate)lysine.

This sequence belongs to the serine/threonine dehydratase family. In terms of assembly, monomer. Homodimer. It depends on pyridoxal 5'-phosphate as a cofactor. Abundantly expressed in liver.

The enzyme catalyses L-serine = pyruvate + NH4(+). It catalyses the reaction L-threonine = 2-oxobutanoate + NH4(+). It carries out the reaction L-glutamate = D-glutamate. Its function is as follows. Catalyzes the pyridoxal-phosphate-dependent dehydrative deamination of L-threonine and L-serine to ammonia and alpha-ketobutyrate and pyruvate, respectively. Also exhibits racemase activity towards L-glutamate and D-glutamate. The protein is Serine dehydratase-like (Sdsl) of Mus musculus (Mouse).